Here is a 432-residue protein sequence, read N- to C-terminus: Ribosomal protein uS12 methylthiotransferase RimO (432 aa).

In terms of domain architecture, MTTase N-terminal spans 4–122 (NKVDIITLGC…LISDLGKSYH (119 aa)). Cysteine 13, cysteine 51, cysteine 85, cysteine 146, cysteine 150, and cysteine 153 together coordinate [4Fe-4S] cluster. A Radical SAM core domain is found at 132–363 (TTPRHYAYVK…MRVQEGISAD (232 aa)). The region spanning 366–432 (ASKVGQTFRV…AFDLYGKVLN (67 aa)) is the TRAM domain.

It belongs to the methylthiotransferase family. RimO subfamily. [4Fe-4S] cluster serves as cofactor.

It localises to the cytoplasm. The enzyme catalyses L-aspartate(89)-[ribosomal protein uS12]-hydrogen + (sulfur carrier)-SH + AH2 + 2 S-adenosyl-L-methionine = 3-methylsulfanyl-L-aspartate(89)-[ribosomal protein uS12]-hydrogen + (sulfur carrier)-H + 5'-deoxyadenosine + L-methionine + A + S-adenosyl-L-homocysteine + 2 H(+). In terms of biological role, catalyzes the methylthiolation of an aspartic acid residue of ribosomal protein uS12. In Parabacteroides distasonis (strain ATCC 8503 / DSM 20701 / CIP 104284 / JCM 5825 / NCTC 11152), this protein is Ribosomal protein uS12 methylthiotransferase RimO.